The primary structure comprises 358 residues: Gibberellin 3-beta-dioxygenase 1 (358 aa).

A Fe2OG dioxygenase domain is found at 204–308 (DLNWAQAALQ…RLSVAFLWGP (105 aa)). Residues His232, Asp234, and His289 each contribute to the Fe cation site. Arg299 is an active-site residue.

The protein belongs to the iron/ascorbate-dependent oxidoreductase family. GA3OX subfamily. The cofactor is L-ascorbate. Requires Fe cation as cofactor. As to expression, expressed in stems, roots, leaves, flowers, and siliques. Highly expressed near the nodes in stems and in the stamen filaments of flowers. Detected in developing cotyledons, vegetative shoot apical meristem and non-meristematic, non-elongation regions of the roots. Found in the cortex and the endodermis of the embryo axis in germinating seeds and in the placenta in developing siliques.

The enzyme catalyses gibberellin A9 + 2-oxoglutarate + O2 = gibberellin A4 + succinate + CO2. It carries out the reaction gibberellin A20 + 2-oxoglutarate + O2 = gibberellin A1 + succinate + CO2. The protein operates within plant hormone biosynthesis; gibberellin biosynthesis. Functionally, converts the inactive gibberellin (GA) precursors GA9 and GA20 into the bioactives gibberellins GA4 and GA1, respectively. Involved in the production of bioactive GA for vegetative growth and development. In Arabidopsis thaliana (Mouse-ear cress), this protein is Gibberellin 3-beta-dioxygenase 1 (GA3OX1).